The following is a 634-amino-acid chain: Probable beta-glucosidase C (634 aa).

The N-terminal stretch at 1–19 (MRIDCTVASLTALASGCQA) is a signal peptide. N-linked (GlcNAc...) asparagine glycans are attached at residues Asn90, Asn112, Asn219, and Asn270. The active site involves Asp337. 4 N-linked (GlcNAc...) asparagine glycosylation sites follow: Asn360, Asn476, Asn484, and Asn524.

This sequence belongs to the glycosyl hydrolase 3 family.

The protein resides in the secreted. It catalyses the reaction Hydrolysis of terminal, non-reducing beta-D-glucosyl residues with release of beta-D-glucose.. It participates in glycan metabolism; cellulose degradation. Beta-glucosidases are one of a number of cellulolytic enzymes involved in the degradation of cellulosic biomass. Catalyzes the last step releasing glucose from the inhibitory cellobiose. The chain is Probable beta-glucosidase C (bglC) from Aspergillus flavus (strain ATCC 200026 / FGSC A1120 / IAM 13836 / NRRL 3357 / JCM 12722 / SRRC 167).